Consider the following 233-residue polypeptide: Inner kinetochore subunit fta4 (233 aa).

Phosphothreonine occurs at positions 189 and 191.

The protein belongs to the NKP1 family. In terms of assembly, component of the inner kinetochore constitutive centromere-associated network (CCAN) (also known as central kinetochore Sim4 complex in fission yeast), which is composed of at least cnl2, cnp3, cnp20, fta1, fta2, fta3, fta4, fta6, fta7, mal2, mhf1, mhf2, mis6, mis15, mis17, sim4 and wip1.

The protein resides in the nucleus. The protein localises to the chromosome. It is found in the centromere. Its subcellular location is the kinetochore. In terms of biological role, component of the kinetochore, a multiprotein complex that assembles on centromeric DNA and attaches chromosomes to spindle microtubules, mediating chromosome segregation and sister chromatid segregation during meiosis and mitosis. Component of the inner kinetochore constitutive centromere-associated network (CCAN), which serves as a structural platform for outer kinetochore assembly. Fta2, fta3 and fta4 associate with the central core (cnt) and inner repeat (inr) region of the centromere. This chain is Inner kinetochore subunit fta4 (fta4), found in Schizosaccharomyces pombe (strain 972 / ATCC 24843) (Fission yeast).